We begin with the raw amino-acid sequence, 187 residues long: Small ribosomal subunit protein uS4 (187 aa).

The S4 RNA-binding domain occupies 105-174 (RRLQTLVFRK…DNHPERAKIV (70 aa)).

It belongs to the universal ribosomal protein uS4 family. In terms of assembly, part of the 30S ribosomal subunit. Contacts protein S5. The interaction surface between S4 and S5 is involved in control of translational fidelity.

Functionally, one of the primary rRNA binding proteins, it binds directly to 16S rRNA where it nucleates assembly of the body of the 30S subunit. With S5 and S12 plays an important role in translational accuracy. This Methanocaldococcus jannaschii (strain ATCC 43067 / DSM 2661 / JAL-1 / JCM 10045 / NBRC 100440) (Methanococcus jannaschii) protein is Small ribosomal subunit protein uS4.